The chain runs to 960 residues: Testis anion transporter 1 (960 aa).

Topologically, residues 1 to 93 are cytoplasmic; that stretch reads MQPDRSFQSF…YRFKDWLLGD (93 aa). The chain crosses the membrane as a helical span at residues 94–114; that stretch reads LLAGISVGLVQIPQVLMLGLL. Residues 115–117 are Extracellular-facing; it reads ARH. The helical transmembrane segment at 118–138 threads the bilayer; sequence LIPPLNVSYAAFCASVIYGIF. Residue glycine 139 is a topological domain, cytoplasmic. Residues 140–160 traverse the membrane as a helical segment; that stretch reads SCHQMSIGTFFLVSALAINVL. Over 161 to 201 the chain is Extracellular; it reads RTQPFNRGHLLLGTFIQADFSNTSFYENYNRSLSSVASVTL. Residue asparagine 190 is glycosylated (N-linked (GlcNAc...) asparagine). The next 2 membrane-spanning stretches (helical) occupy residues 202 to 222 and 223 to 243; these read LTGIIQLSMGMLGFGFIVAYI and PEAAISAYLAATALHVMLSQL. The Cytoplasmic segment spans residues 244–268; sequence TCIFGIMISYNSGPIAFFYNIINYC. The chain crosses the membrane as a helical span at residues 269-289; sequence LGLPKANSTSILLFLTAMVAL. Residues 290 to 353 lie on the Extracellular side of the membrane; it reads RINKCIRISF…PVTPDMSNLT (64 aa). Residues 354–374 traverse the membrane as a helical segment; sequence EVLIESFSLALVSSSLLVFLG. At 375 to 390 the chain is on the cytoplasmic side; it reads KKIASFHNYDVNSNQD. Residues 391 to 411 traverse the membrane as a helical segment; the sequence is LIAIGLCNVVSSFFRSYVFTG. The Extracellular portion of the chain corresponds to 412–427; the sequence is AVARTIIQDKTGGRQQ. Residues 428–448 traverse the membrane as a helical segment; that stretch reads FASLVGAGIMLLLMMKMARFF. Residues 449-453 are Cytoplasmic-facing; that stretch reads YRLPN. The helical transmembrane segment at 454 to 474 threads the bilayer; that stretch reads AIVAGIILSNVLPYLEAVYTL. The Extracellular segment spans residues 475–494; that stretch reads PSLWRQNQYDCLIWMVTFMS. Residues 495-515 form a helical membrane-spanning segment; the sequence is AILLGLDIGLVVAVTFAFFII. Topologically, residues 516 to 960 are cytoplasmic; the sequence is TVQSHRTKIL…ADTSEDALEI (445 aa). One can recognise an STAS domain in the interval 541–792; the sequence is DYREVANIPG…LTLHDAVLFA (252 aa). The interaction with RACGAP1 stretch occupies residues 662–957; the sequence is ITSSSSQRNP…TSKADTSEDA (296 aa). Disordered stretches follow at residues 807–857 and 881–960; these read ESET…EESD and EVEP…ALEI. A compositionally biased stretch (basic and acidic residues) spans 818 to 827; it reads ETDKKEESRH. Positions 884–904 are enriched in acidic residues; sequence PESELEPESELDQETELEPEP. Positions 926–935 are enriched in polar residues; the sequence is SPTQTQARTQ.

It belongs to the SLC26A/SulP transporter (TC 2.A.53) family. In terms of assembly, interacts with RACGAP1. Interacts with CFTR; stimulates anion transport activity of CFTR. N-glycosylated.

The protein localises to the membrane. It carries out the reaction sulfate(out) + chloride(in) = sulfate(in) + chloride(out). The enzyme catalyses oxalate(in) + chloride(out) = oxalate(out) + chloride(in). In terms of biological role, antiporter that mediates the exchange of sulfate and oxalate against chloride ions across a membrane. Stimulates anion transport activity of CFTR. May cooperate with CFTR in the regulation of chloride and bicarbonate ions fluxes required for activation of the ADCY10/PKA pathway during sperm motility and sperm capacitation. May play a role in sperm tail differentiation and motility and hence male fertility. The sequence is that of Testis anion transporter 1 from Bos taurus (Bovine).